Consider the following 23-residue polypeptide: Coenzyme PQQ synthesis protein A (23 aa).

The segment at residues 15–19 (EVTMY) is a cross-link (pyrroloquinoline quinone (Glu-Tyr)).

Belongs to the PqqA family.

Its pathway is cofactor biosynthesis; pyrroloquinoline quinone biosynthesis. Functionally, required for coenzyme pyrroloquinoline quinone (PQQ) biosynthesis. PQQ is probably formed by cross-linking a specific glutamate to a specific tyrosine residue and excising these residues from the peptide. This Ectopseudomonas mendocina (strain ymp) (Pseudomonas mendocina) protein is Coenzyme PQQ synthesis protein A.